The following is a 386-amino-acid chain: MDRFVWTSGLLEINETLVIQQRGVRVYDGEEKIKFDAGTLLLSTHRLIWRDQKNNECCMAIPLSQIVFIEEQAAGIGKSAKIVVHLHPAPPNKEPGPFQSSKNSYIKLSFKEHGQIEFYRRLSEEMTQRRWETVPVSQSLQTKKGPQPGRIRAVGIVGIERKLEEKRKETDKNISEAFEDLSKLMIQAKEMVELSKSIANKIKEKQGDVTEDETIRFKSYLLSMGIANPVTRETYGSGTQYHMQLAKQLAGILQAPLEERGGIMSLTEVYCLVNRARGMELLSPEDLVNACKMLEGLKLPVRLRVFDSGVMVIELQTHKEEEMVASALETVSERGSLTSEEFAKLVGMSVLLAKERLLLAEKMGHLCRDDSVEGLRFYPNLFMTQN.

A GLUE N-terminal domain is found at 1-88; sequence MDRFVWTSGL…SAKIVVHLHP (88 aa). The GLUE C-terminal domain occupies 105-138; it reads YIKLSFKEHGQIEFYRRLSEEMTQRRWETVPVSQ. Residues 160 to 185 adopt a coiled-coil conformation; the sequence is ERKLEEKRKETDKNISEAFEDLSKLM.

It belongs to the VPS36 family. Component of a complex at least composed of ELL, SNF8/EAP30, VPS25/EAP20 and VPS36/EAP45. Component of the endosomal sorting complex required for transport II (ESCRT-II), composed of SNF8, VPS36 and two copies of VPS25. Interacts with VPS25, SNF8, TSG101 and CHMP6. Interacts (via GLUE domain) with ubiquitin. Interacts with RILPL1 (via the C-terminal domain); which recruits ESCRT-II to the endosome membranes. Interacts with ECPAS.

The protein localises to the cytoplasm. Its subcellular location is the endosome. It localises to the late endosome. The protein resides in the membrane. It is found in the nucleus. Component of the ESCRT-II complex (endosomal sorting complex required for transport II), which is required for multivesicular body (MVB) formation and sorting of endosomal cargo proteins into MVBs. The MVB pathway mediates delivery of transmembrane proteins into the lumen of the lysosome for degradation. The ESCRT-II complex is probably involved in the recruitment of the ESCRT-III complex. Its ability to bind ubiquitin probably plays a role in endosomal sorting of ubiquitinated cargo proteins by ESCRT complexes. The ESCRT-II complex may also play a role in transcription regulation, possibly via its interaction with ELL. Binds phosphoinosides such as PtdIns(3,4,5)P3. The sequence is that of Vacuolar protein-sorting-associated protein 36 (Vps36) from Rattus norvegicus (Rat).